A 102-amino-acid chain; its full sequence is Small ribosomal subunit protein uS10 (102 aa).

This sequence belongs to the universal ribosomal protein uS10 family. As to quaternary structure, part of the 30S ribosomal subunit.

Functionally, involved in the binding of tRNA to the ribosomes. This Oenococcus oeni (strain ATCC BAA-331 / PSU-1) protein is Small ribosomal subunit protein uS10.